The sequence spans 3029 residues: Polycystin-1-related protein (3029 aa).

Residues 1 to 21 form the signal peptide; the sequence is MAKHLYLAFSLILVPFLVSKA. Topologically, residues 22–1685 are extracellular; the sequence is KQTSNGEVPW…RDTDKLKNSP (1664 aa). Residues 29-121 enclose the WSC domain; it reads VPWLVGCYRY…KNVASVYSTA (93 aa). PKD domains lie at 364 to 450 and 546 to 634; these read EGHC…IKGV and DHLF…PECY. In terms of domain architecture, REJ spans 633–1476; it reads CYTRGVAIVG…NPYFSDMNHT (844 aa). Disordered stretches follow at residues 754–773, 909–931, and 989–1051; these read RKGPITLSASSSHDPDHPDE, CPSDDHSDRVTPSTTPMTDSNSP, and TSAI…PNKP. The span at 918–931 shows a compositional bias: polar residues; the sequence is VTPSTTPMTDSNSP. Over residues 997 to 1013 the composition is skewed to acidic residues; the sequence is SGDVDDDEVNNDNDDDS. Positions 1020 to 1047 are enriched in polar residues; that stretch reads TLPTPLSMTNANSVNKPIITTDTPSFNK. Residues 1525–1671 form the GAIN-B domain; that stretch reads RNVHVINQTA…GFIQPPNSLH (147 aa). Disulfide bonds link cysteine 1624–cysteine 1651 and cysteine 1639–cysteine 1653. Residues 1624 to 1671 form a GPS region; the sequence is CFYWNKRGKHWASDGCRLEKSINHTLVCRCNHLTAFSGGFIQPPNSLH. A helical membrane pass occupies residues 1686–1706; that stretch reads LTMVLVISILVMYFLLLGFCV. Residues 1707–1895 lie on the Cytoplasmic side of the membrane; the sequence is KADRHDKKKL…SYSRFTRAQR (189 aa). The 119-residue stretch at 1733-1851 folds into the PLAT domain; that stretch reads SRFQLSVQTG…GNGKVECELF (119 aa). The chain crosses the membrane as a helical span at residues 1896-1916; that stretch reads LSCCLSLLLSFLCVNIAWYRP. Residues 1917 to 1933 lie on the Extracellular side of the membrane; the sequence is KIEVTEVLGVLDVSANS. A helical membrane pass occupies residues 1934-1954; it reads IMIGVLGSLMVLPVNFLWIFF. The Cytoplasmic portion of the chain corresponds to 1955–2101; that stretch reads FRYSRRSLSR…YRSKFSLPHG (147 aa). A helical transmembrane segment spans residues 2102 to 2122; it reads FVYVAWFGCLITGTVTSAITI. At 2123–2140 the chain is on the extracellular side; the sequence is WYGLSFGWDLSVHWFQSL. The helical transmembrane segment at 2141–2161 threads the bilayer; it reads VFSLLESLLLSQPIMVLAFIF. Residues 2162-2250 lie on the Cytoplasmic side of the membrane; the sequence is YMSHKTKSGK…SLKNRVLRNY (89 aa). Residues 2251–2271 traverse the membrane as a helical segment; it reads VVELFVFIMFFVVTCALVFSV. Over 2272-2462 the chain is Extracellular; the sequence is ADPDVYHLNQ…GYSYFIRFTK (191 aa). The helical transmembrane segment at 2463–2483 threads the bilayer; that stretch reads LLFVVFFLYLLQHEFFLALKM. Topologically, residues 2484–2496 are cytoplasmic; the sequence is TFSYFTNFWRVYQ. The helical transmembrane segment at 2497–2517 threads the bilayer; it reads LLTIAISSACIVSYIHWSLSL. The Extracellular segment spans residues 2518–2538; that stretch reads YALLREVETERQSRVFYLSRQ. A helical membrane pass occupies residues 2539–2559; sequence ISWSQGFLQASYSLLLFLLLI. Over 2560–2586 the chain is Cytoplasmic; sequence RCLHLLRPFRFVRHFGRILSTSISSLL. Residues 2587-2607 traverse the membrane as a helical segment; sequence ACWVFGFILVVAFAHPGYLLF. The Extracellular portion of the chain corresponds to 2608–2651; that stretch reads GSVHSSFKSFGDAFLLVTSFFRLEGVARYQDFALEEQTLLLSTY. A helical membrane pass occupies residues 2652-2672; sequence FALFLIGFCVIVRGSTAAVVL. Topologically, residues 2673–3029 are cytoplasmic; that stretch reads HGIRCLGKRR…PVGQRVVSAM (357 aa). Positions 2704 to 2726 are disordered; the sequence is KKPKKPRPNSVSDLEETDDEDDL. Positions 2716–2726 are enriched in acidic residues; the sequence is DLEETDDEDDL.

Belongs to the polycystin family. Heterodimer of 2 chains generated by proteolytic processing; the large extracellular N-terminal fragment and the membrane-bound C-terminal fragment predominantly remain associated and non-covalently linked. Autoproteolytically processed at the GPS region of the GAIN-B domain; this cleavage modulates receptor activity. Component of the acid-insoluble and acid-soluble organic matrix of the aragonitic skeleton (at protein level).

It is found in the membrane. The protein is Polycystin-1-related protein of Acropora millepora (Staghorn coral).